A 70-amino-acid chain; its full sequence is Envelope small membrane protein (70 aa).

Residue glycine 2 is the site of N-myristoyl glycine; by host attachment. The interval 2–15 (GSLWSKISQLFVDA) is endoplasmic reticulum retention signal. The Virion surface portion of the chain corresponds to 2 to 25 (GSLWSKISQLFVDAFTEFLVSVVD). Residues 26–46 (IAIFLAILFGFTVAGWLLVFL) form a helical membrane-spanning segment. Residues 47–70 (LRVVCSALLRSRSAIHSPELSKVL) are Intravirion-facing.

Belongs to the arteriviridae E protein family. Homooligomer. Associates with itself into higher-order structures, including dimers, trimers and tetramers. Associates with the GP2a-GP3-GP4 complex. Myristoylated. In terms of processing, not glycosylated.

It is found in the virion membrane. Its subcellular location is the host endoplasmic reticulum membrane. It localises to the host Golgi apparatus membrane. The protein resides in the secreted. In terms of biological role, minor envelope protein. May function as a viroporin in the virion envelope that facilitates uncoating of the virus in order to release the genomic RNA into the cytoplasm for subsequent replication. The polypeptide is Envelope small membrane protein (GP2b) (Sus scrofa (Pig)).